The following is a 372-amino-acid chain: 4-hydroxy-3-methylbut-2-en-1-yl diphosphate synthase (flavodoxin) (372 aa).

Positions 270, 273, 305, and 312 each coordinate [4Fe-4S] cluster.

It belongs to the IspG family. Requires [4Fe-4S] cluster as cofactor.

It carries out the reaction (2E)-4-hydroxy-3-methylbut-2-enyl diphosphate + oxidized [flavodoxin] + H2O + 2 H(+) = 2-C-methyl-D-erythritol 2,4-cyclic diphosphate + reduced [flavodoxin]. It participates in isoprenoid biosynthesis; isopentenyl diphosphate biosynthesis via DXP pathway; isopentenyl diphosphate from 1-deoxy-D-xylulose 5-phosphate: step 5/6. Functionally, converts 2C-methyl-D-erythritol 2,4-cyclodiphosphate (ME-2,4cPP) into 1-hydroxy-2-methyl-2-(E)-butenyl 4-diphosphate. This is 4-hydroxy-3-methylbut-2-en-1-yl diphosphate synthase (flavodoxin) from Shigella dysenteriae serotype 1 (strain Sd197).